The primary structure comprises 349 residues: Short-wave-sensitive opsin 1 (349 aa).

The Extracellular portion of the chain corresponds to 1-34 (MSKMPEEEEFYLFKNISSVGPWDGPQYHIAPVWA). Asn15 carries N-linked (GlcNAc...) asparagine glycosylation. The helical transmembrane segment at 35-59 (FQLQAAFMGIVFLAGLPLNSMVLVA) threads the bilayer. The Cytoplasmic segment spans residues 60–71 (TVRYKKLRHPLN). A helical membrane pass occupies residues 72 to 97 (YVLVNVSVGGFLLCIFSVLPVFVNSC). At 98–111 (NGYFVFGRHVCALE) the chain is on the extracellular side. A disulfide bridge connects residues Cys108 and Cys185. Residues 112–131 (GFLGTVAGLVTGWSLAFLAF) traverse the membrane as a helical segment. Residues 132 to 150 (ERYIVICKPFGNFRFSSKH) lie on the Cytoplasmic side of the membrane. Residues 151-174 (ALMVVLTTWTIGIGVSIPPFFGWS) form a helical membrane-spanning segment. The Extracellular portion of the chain corresponds to 175–200 (RYIAEGLQCSCGPDWYTVGTKYRSEY). The helical transmembrane segment at 201 to 228 (YTWFLFIFCFIVPLSLICFSYAQLLRAL) threads the bilayer. Residues 229–250 (KAVAAQQQESATTQKAEREVSR) are Cytoplasmic-facing. Residues 251 to 274 (MVVVMVGSFCVCYVPYAALAMYMV) form a helical membrane-spanning segment. Residues 275–282 (NNRNHGLD) lie on the Extracellular side of the membrane. Residues 283 to 307 (LRLVSIPAFFSKSSCIYNPIIYCFM) traverse the membrane as a helical segment. Lys294 is subject to N6-(retinylidene)lysine. Residues 308 to 349 (NKQFRACIMEMVCGKAMTDESDISSSQKTEVSTVSSSQVGPN) are Cytoplasmic-facing.

This sequence belongs to the G-protein coupled receptor 1 family. Opsin subfamily. Post-translationally, phosphorylated on some or all of the serine and threonine residues present in the C-terminal region.

It is found in the cell membrane. The protein localises to the photoreceptor inner segment. It localises to the cell projection. Its subcellular location is the cilium. The protein resides in the photoreceptor outer segment. It is found in the cytoplasm. The protein localises to the perinuclear region. In terms of biological role, visual pigments are the light-absorbing molecules that mediate vision. They consist of an apoprotein, opsin, covalently linked to cis-retinal. Required for the maintenance of cone outer segment organization in the ventral retina, but not essential for the maintenance of functioning cone photoreceptors. Involved in ensuring correct abundance and localization of retinal membrane proteins. May increase spectral sensitivity in dim light. This is Short-wave-sensitive opsin 1 (OPN1SW) from Saimiri boliviensis boliviensis (Bolivian squirrel monkey).